Reading from the N-terminus, the 378-residue chain is Ribosomal RNA large subunit methyltransferase G (378 aa).

This sequence belongs to the methyltransferase superfamily. RlmG family.

The protein resides in the cytoplasm. It carries out the reaction guanosine(1835) in 23S rRNA + S-adenosyl-L-methionine = N(2)-methylguanosine(1835) in 23S rRNA + S-adenosyl-L-homocysteine + H(+). Specifically methylates the guanine in position 1835 (m2G1835) of 23S rRNA. The protein is Ribosomal RNA large subunit methyltransferase G of Escherichia coli O6:K15:H31 (strain 536 / UPEC).